The primary structure comprises 358 residues: Sulfate/thiosulfate import ATP-binding protein CysA 1 (358 aa).

The ABC transporter domain maps to 3–237; the sequence is IQVENIRKAF…PASAFVYGFL (235 aa). 35–42 provides a ligand contact to ATP; sequence GPSGCGKT.

It belongs to the ABC transporter superfamily. Sulfate/tungstate importer (TC 3.A.1.6) family. As to quaternary structure, the complex is composed of two ATP-binding proteins (CysA), two transmembrane proteins (CysT and CysW) and a solute-binding protein (CysP).

It is found in the cell inner membrane. It catalyses the reaction sulfate(out) + ATP + H2O = sulfate(in) + ADP + phosphate + H(+). The catalysed reaction is thiosulfate(out) + ATP + H2O = thiosulfate(in) + ADP + phosphate + H(+). Its function is as follows. Part of the ABC transporter complex CysAWTP involved in sulfate/thiosulfate import. Responsible for energy coupling to the transport system. The sequence is that of Sulfate/thiosulfate import ATP-binding protein CysA 1 from Chromobacterium violaceum (strain ATCC 12472 / DSM 30191 / JCM 1249 / CCUG 213 / NBRC 12614 / NCIMB 9131 / NCTC 9757 / MK).